We begin with the raw amino-acid sequence, 498 residues long: Probable malate:quinone oxidoreductase 2 (498 aa).

Belongs to the MQO family. FAD serves as cofactor.

It carries out the reaction (S)-malate + a quinone = a quinol + oxaloacetate. Its pathway is carbohydrate metabolism; tricarboxylic acid cycle; oxaloacetate from (S)-malate (quinone route): step 1/1. The protein is Probable malate:quinone oxidoreductase 2 of Staphylococcus aureus (strain COL).